Here is a 160-residue protein sequence, read N- to C-terminus: uncharacterized protein (160 aa).

Belongs to the Dps family.

This is an uncharacterized protein from Haemophilus influenzae (strain ATCC 51907 / DSM 11121 / KW20 / Rd).